The following is a 179-amino-acid chain: Large ribosomal subunit protein uL5 (179 aa).

This sequence belongs to the universal ribosomal protein uL5 family. In terms of assembly, part of the 50S ribosomal subunit; part of the 5S rRNA/L5/L18/L25 subcomplex. Contacts the 5S rRNA and the P site tRNA. Forms a bridge to the 30S subunit in the 70S ribosome.

Its function is as follows. This is one of the proteins that bind and probably mediate the attachment of the 5S RNA into the large ribosomal subunit, where it forms part of the central protuberance. In the 70S ribosome it contacts protein S13 of the 30S subunit (bridge B1b), connecting the 2 subunits; this bridge is implicated in subunit movement. Contacts the P site tRNA; the 5S rRNA and some of its associated proteins might help stabilize positioning of ribosome-bound tRNAs. The chain is Large ribosomal subunit protein uL5 from Burkholderia vietnamiensis (strain G4 / LMG 22486) (Burkholderia cepacia (strain R1808)).